The primary structure comprises 269 residues: MIPLKIAIAGANGRMGRVLVEAVNNHPDTVLSGALEHSGSEALGLDAGYAVGLKTGIAISDDVDAVLAQSDVLIDFTRPEPTLKHLQKCVEKQVNIIIGTTGFDDAGKAAIRAAAEKTGIVFAANFSVGVNLTFHILDTVARVLNEGYDIEIIEGHHRHKVDAPSGTALRMGEVIAGALGRDLKQCAVYGREGHTGPRDPSTIGFATVRAGDIVGDHTALFATDGERVEITHKAGSRMTFAAGAVRAAVWVNGKTGLYDMQDVLGLNNR.

NAD(+)-binding positions include 10–15 (GANGRM), Glu36, 99–101 (GTT), and 123–126 (AANF). His156 serves as the catalytic Proton donor/acceptor. Residue His157 participates in (S)-2,3,4,5-tetrahydrodipicolinate binding. Lys160 functions as the Proton donor in the catalytic mechanism. Position 166–167 (166–167 (GT)) interacts with (S)-2,3,4,5-tetrahydrodipicolinate.

Belongs to the DapB family.

The protein localises to the cytoplasm. It catalyses the reaction (S)-2,3,4,5-tetrahydrodipicolinate + NAD(+) + H2O = (2S,4S)-4-hydroxy-2,3,4,5-tetrahydrodipicolinate + NADH + H(+). The catalysed reaction is (S)-2,3,4,5-tetrahydrodipicolinate + NADP(+) + H2O = (2S,4S)-4-hydroxy-2,3,4,5-tetrahydrodipicolinate + NADPH + H(+). The protein operates within amino-acid biosynthesis; L-lysine biosynthesis via DAP pathway; (S)-tetrahydrodipicolinate from L-aspartate: step 4/4. Catalyzes the conversion of 4-hydroxy-tetrahydrodipicolinate (HTPA) to tetrahydrodipicolinate. The polypeptide is 4-hydroxy-tetrahydrodipicolinate reductase (Neisseria gonorrhoeae (strain ATCC 700825 / FA 1090)).